Here is a 194-residue protein sequence, read N- to C-terminus: Glycerol-3-phosphate acyltransferase 2 (194 aa).

Transmembrane regions (helical) follow at residues 1–21 (MWLLALVVAYLIGSIPTAYVV), 64–84 (VLAVLLGQALGGPVLVILAAL), 112–132 (LAMAPLALFWAFLIWLAVVIF), 135–155 (YISLGSIVAAAVAPFLVIYFH), and 156–173 (RPWPYVLFTFVAAALVIY).

It belongs to the PlsY family. Probably interacts with PlsX.

The protein resides in the cell membrane. The enzyme catalyses an acyl phosphate + sn-glycerol 3-phosphate = a 1-acyl-sn-glycero-3-phosphate + phosphate. Its pathway is lipid metabolism; phospholipid metabolism. Catalyzes the transfer of an acyl group from acyl-phosphate (acyl-PO(4)) to glycerol-3-phosphate (G3P) to form lysophosphatidic acid (LPA). This enzyme utilizes acyl-phosphate as fatty acyl donor, but not acyl-CoA or acyl-ACP. The protein is Glycerol-3-phosphate acyltransferase 2 of Moorella thermoacetica (strain ATCC 39073 / JCM 9320).